A 152-amino-acid polypeptide reads, in one-letter code: MSTPARRRLMRDFKRLQEDPPVGVSGAPSENNIMQWNAVIFGPEGTPFEDGTFKLVIEFSEEYPNKPPTVRFLSKMFHPNVYADGSICLDILQNRWSPTYDVSSILTSIQSLLDEPNPNSPANSQAAQLYQENKREYEKRVSAIVEQSWNDS.

The UBC core domain occupies 4-150 (PARRRLMRDF…VSAIVEQSWN (147 aa)). Residue cysteine 88 is the Glycyl thioester intermediate of the active site.

Belongs to the ubiquitin-conjugating enzyme family. Interacts with RAD18, UBR2 and WAC.

Its subcellular location is the cell membrane. It localises to the nucleus. It carries out the reaction S-ubiquitinyl-[E1 ubiquitin-activating enzyme]-L-cysteine + [E2 ubiquitin-conjugating enzyme]-L-cysteine = [E1 ubiquitin-activating enzyme]-L-cysteine + S-ubiquitinyl-[E2 ubiquitin-conjugating enzyme]-L-cysteine.. It participates in protein modification; protein ubiquitination. In terms of biological role, E2 ubiquitin-conjugating enzyme that accepts ubiquitin from the ubiquitin-activating enzyme E1 and transfers it to a E3 ubiquitin-protein ligase. In vitro catalyzes 'Lys-11'-, as well as 'Lys-48'- and 'Lys-63'-linked polyubiquitination. Together with the E3 enzyme BRE1 (RNF20 and/or RNF40), plays a role in transcription regulation by catalyzing the monoubiquitination of histone H2B at 'Lys-120' to form H2BK120ub1. H2BK120ub1 gives a specific tag for epigenetic transcriptional activation, elongation by RNA polymerase II, telomeric silencing, and is also a prerequisite for H3K4me and H3K79me formation. May play a role in DNA repair. Associates to the E3 ligase RAD18 to form the UBE2B-RAD18 ubiquitin ligase complex involved in mono-ubiquitination of DNA-associated PCNA on 'Lys-164'. In association with the E3 enzyme UBR4, is involved in N-end rule-dependent protein degradation. May be involved in neurite outgrowth. This Bos taurus (Bovine) protein is Ubiquitin-conjugating enzyme E2 B (UBE2B).